The primary structure comprises 234 residues: Peptidyl-prolyl cis-trans isomerase, rhodopsin-specific isozyme (234 aa).

Positions Met-1 to Gly-19 are cleaved as a signal peptide. The PPIase cyclophilin-type domain occupies Tyr-29 to Glu-187. N-linked (GlcNAc...) asparagine glycosylation is present at Asn-67. The helical transmembrane segment at Ile-202–Ile-222 threads the bilayer.

Belongs to the cyclophilin-type PPIase family. In terms of tissue distribution, expressed specifically in photoreceptor cells.

It localises to the membrane. The catalysed reaction is [protein]-peptidylproline (omega=180) = [protein]-peptidylproline (omega=0). Its function is as follows. PPIases accelerate the folding of proteins. It catalyzes the cis-trans isomerization of proline imidic peptide bonds in oligopeptides. Acts on the folding of rhodopsin RH1 and RH2 (but not RH3) and is required for visual transduction. This is Peptidyl-prolyl cis-trans isomerase, rhodopsin-specific isozyme (NINAA) from Calliphora vicina (Blue blowfly).